Consider the following 202-residue polypeptide: Dephospho-CoA kinase (202 aa).

The 200-residue stretch at 3–202 (IFGLTGGIGS…ISHRSKYLSC (200 aa)) folds into the DPCK domain. 11–16 (GSGKSL) lines the ATP pocket.

Belongs to the CoaE family.

Its subcellular location is the cytoplasm. The catalysed reaction is 3'-dephospho-CoA + ATP = ADP + CoA + H(+). Its pathway is cofactor biosynthesis; coenzyme A biosynthesis; CoA from (R)-pantothenate: step 5/5. In terms of biological role, catalyzes the phosphorylation of the 3'-hydroxyl group of dephosphocoenzyme A to form coenzyme A. The sequence is that of Dephospho-CoA kinase from Ehrlichia chaffeensis (strain ATCC CRL-10679 / Arkansas).